The primary structure comprises 314 residues: Ribosomal protein L11 methyltransferase (314 aa).

The S-adenosyl-L-methionine site is built by Thr-164, Gly-185, Asp-207, and Asn-249.

This sequence belongs to the methyltransferase superfamily. PrmA family.

The protein localises to the cytoplasm. It carries out the reaction L-lysyl-[protein] + 3 S-adenosyl-L-methionine = N(6),N(6),N(6)-trimethyl-L-lysyl-[protein] + 3 S-adenosyl-L-homocysteine + 3 H(+). Its function is as follows. Methylates ribosomal protein L11. This is Ribosomal protein L11 methyltransferase from Clostridium beijerinckii (strain ATCC 51743 / NCIMB 8052) (Clostridium acetobutylicum).